Reading from the N-terminus, the 556-residue chain is Sensory neuron membrane protein 2 (556 aa).

Topologically, residues 1-6 are cytoplasmic; the sequence is MIHWSL. Residues 7–27 form a helical membrane-spanning segment; the sequence is IVSALGVCVAVLGGYCGWILF. Residues 28-522 lie on the Extracellular side of the membrane; sequence PNMVHKKVEQ…KLINTLKTLN (495 aa). Residues Asn66, Asn274, Asn310, and Asn324 are each glycosylated (N-linked (GlcNAc...) asparagine). 2 disulfide bridges follow: Cys320-Cys388 and Cys349-Cys415. Residues 523-543 traverse the membrane as a helical segment; sequence IVHWATLCGGIGVAVACLIYY. The Cytoplasmic segment spans residues 544–556; the sequence is IYQRGRVVEPPVK.

Belongs to the CD36 family. As to expression, detected in the head and to a lesser extent in legs and wings.

The protein resides in the cell membrane. In terms of biological role, plays an olfactory role that is not restricted to pheromone sensitivity. The sequence is that of Sensory neuron membrane protein 2 from Drosophila melanogaster (Fruit fly).